The following is a 280-amino-acid chain: MMPLGLFPLPRAAAVLLISLLTLPAQAAERVISLSPSTTELAYAAGLGDKLVAVSAYSDYPESAKKLEHVASWQGINVERILALKPDLILAWRGGNPQRPLDQLAALGIPIFYSDPTHIDQIASDLDKLAQYSPHPEQAHQAAEQFRQHVNTLRDRYARSQPKRTFLQFGTQPLFTSSGHTLQSEVVSLCGGENIFADSRVPWPQVSRERVMTRKPQVIVVSGTQSQVDNVSAFWLPQLVVPVIALNEDWFNRASPRILLAAQQLCQQMASIPTPVAESH.

An N-terminal signal peptide occupies residues 1 to 27 (MMPLGLFPLPRAAAVLLISLLTLPAQA). A Fe/B12 periplasmic-binding domain is found at 30–277 (RVISLSPSTT…QMASIPTPVA (248 aa)). Tyr57 is a binding site for cyanocob(III)alamin. An intrachain disulfide couples Cys190 to Cys266.

This sequence belongs to the BtuF family. In terms of assembly, the complex is composed of two ATP-binding proteins (BtuD), two transmembrane proteins (BtuC) and a solute-binding protein (BtuF).

Its subcellular location is the periplasm. Its function is as follows. Part of the ABC transporter complex BtuCDF involved in vitamin B12 import. Binds vitamin B12 and delivers it to the periplasmic surface of BtuC. The chain is Vitamin B12-binding protein from Yersinia pseudotuberculosis serotype O:3 (strain YPIII).